The chain runs to 394 residues: Probable pectate lyase 16 (394 aa).

A signal peptide spans 1–22 (MTLFTVSCLLVVLFLCHSLVHA). Residues D192, D216, and D220 each coordinate Ca(2+). Residue R272 is part of the active site.

The protein belongs to the polysaccharide lyase 1 family. Ca(2+) is required as a cofactor.

The enzyme catalyses Eliminative cleavage of (1-&gt;4)-alpha-D-galacturonan to give oligosaccharides with 4-deoxy-alpha-D-galact-4-enuronosyl groups at their non-reducing ends.. The protein operates within glycan metabolism; pectin degradation; 2-dehydro-3-deoxy-D-gluconate from pectin: step 2/5. This chain is Probable pectate lyase 16, found in Arabidopsis thaliana (Mouse-ear cress).